The primary structure comprises 238 residues: MSSRSYKRVLLKLSGEALMGEDAFGINRSTIVRMTDEIAEVAALGVELAIVIGGGNIFRGVAPGAQGMDRATADYMGMMATIMNALALQDALKHKGVDTRVQSALNIDQVVEPYIRPKALRYLEEGKVVIFAAGTGNPFFTTDTAAALRGAEIGAEIVLKATKVDGIYSADPNKDPTATRYARISFDEVIVRRLEVMDATAFALCRDQKLPIKVFSINKSGALKRAVSGEDEGTLVHV.

12–15 (KLSG) contributes to the ATP binding site. Residue Gly54 participates in UMP binding. Positions 55 and 59 each coordinate ATP. UMP-binding positions include Asp74 and 135 to 142 (TGNPFFTT). Thr162, Tyr168, and Asp171 together coordinate ATP.

This sequence belongs to the UMP kinase family. Homohexamer.

Its subcellular location is the cytoplasm. The enzyme catalyses UMP + ATP = UDP + ADP. It participates in pyrimidine metabolism; CTP biosynthesis via de novo pathway; UDP from UMP (UMPK route): step 1/1. Its activity is regulated as follows. Inhibited by UTP. In terms of biological role, catalyzes the reversible phosphorylation of UMP to UDP. The polypeptide is Uridylate kinase (Bordetella pertussis (strain Tohama I / ATCC BAA-589 / NCTC 13251)).